A 424-amino-acid chain; its full sequence is Glutamate-1-semialdehyde 2,1-aminomutase (424 aa).

Lys-263 carries the post-translational modification N6-(pyridoxal phosphate)lysine.

The protein belongs to the class-III pyridoxal-phosphate-dependent aminotransferase family. HemL subfamily. In terms of assembly, homodimer. Pyridoxal 5'-phosphate is required as a cofactor.

The protein localises to the cytoplasm. It carries out the reaction (S)-4-amino-5-oxopentanoate = 5-aminolevulinate. It functions in the pathway porphyrin-containing compound metabolism; protoporphyrin-IX biosynthesis; 5-aminolevulinate from L-glutamyl-tRNA(Glu): step 2/2. The sequence is that of Glutamate-1-semialdehyde 2,1-aminomutase from Campylobacter jejuni (strain RM1221).